Reading from the N-terminus, the 67-residue chain is Large ribosomal subunit protein uL29 (67 aa).

It belongs to the universal ribosomal protein uL29 family.

This is Large ribosomal subunit protein uL29 from Alkaliphilus metalliredigens (strain QYMF).